We begin with the raw amino-acid sequence, 324 residues long: MLWKKRKVLYFAGISVFILILLLLKLNSKPKANVWPTSSKIVIYNRIPKTGSTTFTNAIAYDLYKENGFSVLHVNMTKNRQVMSLPDQYTFVNNITTWTERLPAFYHGHVAFIDFQRFGIANPIYINIIREPLERLLSHYYFLRYGDNYRIGLKRSRAGNNETFDECYSRGGKDCDMKQMWIQIPYFCGHYHFCTEVGNPEALRVAKQNVLEKYLLVGTTSRMRDMIALLEVTVPDFFKGALGHFDSLDANRAHLRYTKKKIPPNDQTLSMIRRDEVYKMEREFYDFINNLFDAVFKKATNGISKADDLVKLPLQYHFEKIKPS.

Residues 1-6 (MLWKKR) lie on the Cytoplasmic side of the membrane. A helical; Signal-anchor for type II membrane protein membrane pass occupies residues 7–24 (KVLYFAGISVFILILLLL). The Lumenal segment spans residues 25-324 (KLNSKPKANV…QYHFEKIKPS (300 aa)). Residues Asn75 and Asn94 are each glycosylated (N-linked (GlcNAc...) asparagine). Catalysis depends on residues His107 and His109. Residue Asn161 is glycosylated (N-linked (GlcNAc...) asparagine). Intrachain disulfides connect Cys167-Cys175 and Cys188-Cys194.

It belongs to the sulfotransferase 3 family. In terms of assembly, homotrimer. In terms of tissue distribution, present in the hypodermis, muscle, distal tip cells (DTCs) and in neurons (at protein level).

The protein resides in the golgi apparatus membrane. Functionally, catalyzes the transfer of sulfate to the C2-position of selected hexuronic acid residues within the maturing heparan sulfate (HS). Involved in cell adhesion and guidance by specifically modifying proteoglycans in the extracellular matrix and on the cell surface that are essential for axon migrations. This is Heparan sulfate 2-O-sulfotransferase hst-2 from Caenorhabditis elegans.